Consider the following 142-residue polypeptide: Hemoglobin subunit alpha (142 aa).

The Globin domain maps to 2–142 (VLSADDKANI…VSTVLTSKYR (141 aa)). Ser-4 is subject to Phosphoserine. 2 positions are modified to N6-succinyllysine: Lys-8 and Lys-12. The residue at position 17 (Lys-17) is an N6-acetyllysine; alternate. Lys-17 is subject to N6-succinyllysine; alternate. Tyr-25 carries the phosphotyrosine modification. Ser-36 is subject to Phosphoserine. N6-succinyllysine is present on Lys-41. Ser-50 carries the post-translational modification Phosphoserine. His-59 is a binding site for O2. His-88 contributes to the heme b binding site. At Thr-109 the chain carries Phosphothreonine. Phosphoserine occurs at positions 125 and 132. 2 positions are modified to phosphothreonine: Thr-135 and Thr-138. Ser-139 bears the Phosphoserine mark.

This sequence belongs to the globin family. Heterotetramer of two alpha chains and two beta chains. As to expression, red blood cells.

Its function is as follows. Involved in oxygen transport from the lung to the various peripheral tissues. Hemopressin acts as an antagonist peptide of the cannabinoid receptor CNR1. Hemopressin-binding efficiently blocks cannabinoid receptor CNR1 and subsequent signaling. This Cricetomys gambianus (Northern giant pouched rat) protein is Hemoglobin subunit alpha (HBA).